The primary structure comprises 342 residues: uncharacterized protein (342 aa).

A substrate-binding site is contributed by R69. H176 functions as the Proton donor in the catalytic mechanism. A substrate-binding site is contributed by D240.

It belongs to the aldose epimerase family.

This is an uncharacterized protein from Saccharomyces cerevisiae (strain ATCC 204508 / S288c) (Baker's yeast).